Reading from the N-terminus, the 431-residue chain is Polyprenol-phosphate-mannose-dependent alpha-(1-2)-phosphatidylinositol pentamannoside mannosyltransferase (431 aa).

10 helical membrane-spanning segments follow: residues 43–63, 108–128, 148–168, 175–195, 202–222, 229–249, 290–310, 332–352, 364–384, and 397–417; these read AAVLLLVLSVGARLAWTYLAP, FAAVVFYPLHLVPFGLIALLW, GGTAETGHFAAMLWTAIAIWI, FDYGQINVLLMLAALWAVYTP, LLVGVASGVKLTPAITAVYLV, AAAFSVVVFLATVGVSLLVVG, GFGPLVLAAIASTAVLAILAW, LSPISWTHHWVWLVPLMIWLI, ILGWGWLVLTIVGVPWLLSFA, and LAWAGLVYVVATLATLGWIAA.

This sequence belongs to the glycosyltransferase 87 family.

Its subcellular location is the cell membrane. Its pathway is phospholipid metabolism; phosphatidylinositol metabolism. Functionally, catalyzes the alpha-1,2 addition of a mannose residue from polyprenol-phosphate-mannose (PPM) to a monoacyl phosphatidylinositol tetramannoside (AcPIM4) to generate a monoacyl phosphatidylinositol pentamannoside (AcPIM5). In Mycobacterium tuberculosis (strain CDC 1551 / Oshkosh), this protein is Polyprenol-phosphate-mannose-dependent alpha-(1-2)-phosphatidylinositol pentamannoside mannosyltransferase (pimE).